Reading from the N-terminus, the 373-residue chain is Putative glutamate--cysteine ligase 2-2 (373 aa).

It belongs to the glutamate--cysteine ligase type 2 family. YbdK subfamily.

It carries out the reaction L-cysteine + L-glutamate + ATP = gamma-L-glutamyl-L-cysteine + ADP + phosphate + H(+). In terms of biological role, ATP-dependent carboxylate-amine ligase which exhibits weak glutamate--cysteine ligase activity. The sequence is that of Putative glutamate--cysteine ligase 2-2 from Legionella pneumophila (strain Corby).